A 141-amino-acid polypeptide reads, in one-letter code: MALERTFSIIKPDAVERNLIGEIYHRIEKAGLRIIAAKMVHLNDEQASGFYAEHEGKEFFPALKEFMTSGPIMVQVLEGENAIARYRELMGKTNPEEAACGTIRADYALSMRHNSVHGSDSPASAAREIAFFFPESEICPR.

Residues K11, F59, R87, T93, R104, and N114 each contribute to the ATP site. H117 serves as the catalytic Pros-phosphohistidine intermediate.

It belongs to the NDK family. Homotetramer. The cofactor is Mg(2+).

Its subcellular location is the cytoplasm. The catalysed reaction is a 2'-deoxyribonucleoside 5'-diphosphate + ATP = a 2'-deoxyribonucleoside 5'-triphosphate + ADP. It catalyses the reaction a ribonucleoside 5'-diphosphate + ATP = a ribonucleoside 5'-triphosphate + ADP. Functionally, major role in the synthesis of nucleoside triphosphates other than ATP. The ATP gamma phosphate is transferred to the NDP beta phosphate via a ping-pong mechanism, using a phosphorylated active-site intermediate. This chain is Nucleoside diphosphate kinase, found in Vibrio vulnificus (strain CMCP6).